The following is a 263-amino-acid chain: Endonuclease 8 (263 aa).

The Schiff-base intermediate with DNA role is filled by Pro-2. Catalysis depends on Glu-3, which acts as the Proton donor. Lys-53 functions as the Proton donor; for beta-elimination activity in the catalytic mechanism. Gln-70, Arg-125, and Asn-169 together coordinate DNA. The segment at 229 to 263 adopts an FPG-type zinc-finger fold; that stretch reads KVFHRDGELCERCGGIIEKTTLSSRPFYWCPGCQH. The active-site Proton donor; for delta-elimination activity is the Arg-253.

This sequence belongs to the FPG family. It depends on Zn(2+) as a cofactor.

It carries out the reaction 2'-deoxyribonucleotide-(2'-deoxyribose 5'-phosphate)-2'-deoxyribonucleotide-DNA = a 3'-end 2'-deoxyribonucleotide-(2,3-dehydro-2,3-deoxyribose 5'-phosphate)-DNA + a 5'-end 5'-phospho-2'-deoxyribonucleoside-DNA + H(+). In terms of biological role, involved in base excision repair of DNA damaged by oxidation or by mutagenic agents. Acts as a DNA glycosylase that recognizes and removes damaged bases. Has a preference for oxidized pyrimidines, such as thymine glycol, 5,6-dihydrouracil and 5,6-dihydrothymine. Has AP (apurinic/apyrimidinic) lyase activity and introduces nicks in the DNA strand. Cleaves the DNA backbone by beta-delta elimination to generate a single-strand break at the site of the removed base with both 3'- and 5'-phosphates. In Shigella flexneri serotype 5b (strain 8401), this protein is Endonuclease 8.